The sequence spans 612 residues: Zinc metalloproteinase nas-36 (612 aa).

An N-terminal signal peptide occupies residues 1-16 (MLLLVLLFVFISATNA). N15 is a glycosylation site (N-linked (GlcNAc...) asparagine). The propeptide occupies 17 to 122 (SDVGRRELEK…KSKPNVRGRR (106 aa)). The Peptidase M12A domain maps to 123-320 (SFDASPESKW…IETINKAYCS (198 aa)). Residue N163 is glycosylated (N-linked (GlcNAc...) asparagine). Intrachain disulfides connect C166-C319, C190-C209, C329-C343, C345-C354, C365-C394, C515-C546, C519-C551, and C531-C536. H217 serves as a coordination point for Zn(2+). E218 is an active-site residue. H221 and H227 together coordinate Zn(2+). The EGF-like domain occupies 320-355 (SDRCSGSNDCKNGGYPHPKQCDTCLCPNGLSGPKCE). One can recognise a CUB domain in the interval 365–478 (CGGKIVVKEE…VGFKLQARAT (114 aa)). In terms of domain architecture, TSP type-1 spans 503-552 (TDQWAEWGSWSQCSRSCGGCGIMSRVRVCRTKQCKGRRQEFSTCNLKACP).

The cofactor is Zn(2+).

The protein localises to the secreted. Its activity is regulated as follows. Inhibited by 1,10-phenanthroline. Its function is as follows. Metalloprotease. Involved in molting, a process during larval stages in which a new cuticle is formed and the old cuticle is shed. This chain is Zinc metalloproteinase nas-36, found in Haemonchus contortus (Barber pole worm).